The following is a 255-amino-acid chain: Wtf element wtf15 (255 aa).

The segment at 19–78 is disordered; the sequence is KAGHEIDLEGSPPSEHNSEEKSTLPSNSDILTSANPVSQASETPDHSIESNTGSTQSPTS. 2 stretches are compositionally biased toward polar residues: residues 41 to 60 and 67 to 78; these read TLPS…QASE and ESNTGSTQSPTS. A run of 4 helical transmembrane segments spans residues 85 to 105, 112 to 132, 162 to 182, and 187 to 208; these read FSFC…CVLP, FLIA…SGSI, FLKT…LVLL, and WGWK…SFCL.

This sequence belongs to the WTF family.

It is found in the spore membrane. Functionally, may act in meiotic drive. The sequence is that of Wtf element wtf15 from Schizosaccharomyces pombe (strain 972 / ATCC 24843) (Fission yeast).